A 264-amino-acid polypeptide reads, in one-letter code: Splicing factor U2af 38 kDa subunit (264 aa).

The C3H1-type 1 zinc-finger motif lies at 12–40; that stretch reads EKDKVNCSFYFKIGACRHGDRCSRIHNKP. At S19 the chain carries Phosphoserine. Residues 44-149 form the RRM domain; it reads QTVLLQNLYV…RPVYSELSPV (106 aa). The segment at 151–178 adopts a C3H1-type 2 zinc-finger fold; that stretch reads DFREACCRQYEMGECTRSGFCNFMHLKP. The span at 190 to 219 shows a compositional bias: basic residues; sequence RRRRARSRSRSPGRRRGSRSRSRSPGRRGG. Residues 190-264 are disordered; sequence RRRRARSRSR…GGGGGGGGRY (75 aa). Basic and acidic residues predominate over residues 233–251; that stretch reads NERDNMRGNDRGNDRDRRK. Positions 253–264 are enriched in gly residues; the sequence is GGGGGGGGGGRY.

This sequence belongs to the splicing factor SR family. As to quaternary structure, associates with a 65 kDa protein.

Its subcellular location is the nucleus. Its function is as follows. Necessary for the splicing of pre-mRNA. Binds to the polypyrimidine tract of introns early during spliceosome assembly. The protein is Splicing factor U2af 38 kDa subunit (U2af38) of Drosophila melanogaster (Fruit fly).